Consider the following 366-residue polypeptide: uncharacterized protein (366 aa).

Residues 199–267 (QKKQIEDEEK…QLKDAQAKRD (69 aa)) form a disordered region.

This is an uncharacterized protein from Haemophilus influenzae (strain ATCC 51907 / DSM 11121 / KW20 / Rd).